The following is a 288-amino-acid chain: ATP synthase gamma chain (288 aa).

It belongs to the ATPase gamma chain family. F-type ATPases have 2 components, CF(1) - the catalytic core - and CF(0) - the membrane proton channel. CF(1) has five subunits: alpha(3), beta(3), gamma(1), delta(1), epsilon(1). CF(0) has three main subunits: a, b and c.

It localises to the cell inner membrane. Its function is as follows. Produces ATP from ADP in the presence of a proton gradient across the membrane. The gamma chain is believed to be important in regulating ATPase activity and the flow of protons through the CF(0) complex. The sequence is that of ATP synthase gamma chain from Blochmanniella pennsylvanica (strain BPEN).